The following is a 115-amino-acid chain: NADH-ubiquinone oxidoreductase chain 3 (115 aa).

The next 3 membrane-spanning stretches (helical) occupy residues 3 to 23, 55 to 75, and 84 to 104; these read LMLTLLTNTLLASLLVLIAFW, FFLVAITFLLFDLEIALLLPL, and LNTMLIMALILISLLAISLAY.

Belongs to the complex I subunit 3 family. In terms of assembly, core subunit of respiratory chain NADH dehydrogenase (Complex I) which is composed of 45 different subunits. Interacts with TMEM186. Interacts with TMEM242.

It localises to the mitochondrion inner membrane. It catalyses the reaction a ubiquinone + NADH + 5 H(+)(in) = a ubiquinol + NAD(+) + 4 H(+)(out). In terms of biological role, core subunit of the mitochondrial membrane respiratory chain NADH dehydrogenase (Complex I) which catalyzes electron transfer from NADH through the respiratory chain, using ubiquinone as an electron acceptor. Essential for the catalytic activity of complex I. The sequence is that of NADH-ubiquinone oxidoreductase chain 3 from Equus asinus (Donkey).